Reading from the N-terminus, the 169-residue chain is Short form salivary protein D7R3 (169 aa).

The first 21 residues, 1 to 21, serve as a signal peptide directing secretion; that stretch reads MFGKLLPCAILVWCLFSLGQA. Cystine bridges form between Cys30-Cys62, Cys43-Cys168, and Cys101-Cys120. Noradrenaline is bound by residues Glu31 and Arg46. Glu31 contacts serotonin. Serotonin contacts are provided by His59, Tyr118, Asp135, and Glu138. Positions 118, 135, and 138 each coordinate histamine. Noradrenaline-binding residues include Asp135 and Glu138.

This sequence belongs to the PBP/GOBP family. Female saliva (at protein level). Female salivary gland. Low-level expression in female carcass without salivary glands. Not detected in male tissues.

The protein localises to the secreted. In terms of biological role, modulates blood feeding of female mosquitoes on vertebrate species by binding and sequestering different mediators involved in the host response. Binds serotonin, noradrenaline, histamine and adrenaline. Inhibits histamine-, serotonin- and noradrenaline-induced smooth muscle contraction. Exhibits vasodilating activity. The protein is Short form salivary protein D7R3 of Anopheles gambiae (African malaria mosquito).